The following is a 63-amino-acid chain: Large ribosomal subunit protein bL32 (63 aa).

A compositionally biased stretch (basic residues) spans 1–16 (MAVPKRKTSRMKRGFR). The disordered stretch occupies residues 1–22 (MAVPKRKTSRMKRGFRRSADAI).

It belongs to the bacterial ribosomal protein bL32 family.

This chain is Large ribosomal subunit protein bL32, found in Beijerinckia indica subsp. indica (strain ATCC 9039 / DSM 1715 / NCIMB 8712).